A 360-amino-acid polypeptide reads, in one-letter code: MEEIFDKLQAVADRYDELNELISDPEVIADSQRFMKLSKEEGSLRETVEKYNEYKEVTQTIKDDTEMLREESDPDLVEMTKEELNEAKERQAQLQDELEVLLIPKDPNDDKNIIMEIRGAAGGDEASLFAADLYNMYVRYAEKQGWNVEVVDRNETEVGGFKEIALIITGDQVYSKLKFENGAHRVQRIPATESAGRVHTSTATVGVMPEAEDVDVDLDPKDIRVDVYRSSGAGGQHINKTSSAVRMTHLPTGIVVAMQDERSQQQNRAKAMQILKARVYDYYQQQEQSEYDAQRKNAIGTGDRSERIRTYNYPQNRVTDHRIGLTLNKLDKIMAGDLEEIIESLIIADQAQKLEQLRNE.

At glutamine 236 the chain carries N5-methylglutamine.

This sequence belongs to the prokaryotic/mitochondrial release factor family. Post-translationally, methylated by PrmC. Methylation increases the termination efficiency of RF1.

Its subcellular location is the cytoplasm. Functionally, peptide chain release factor 1 directs the termination of translation in response to the peptide chain termination codons UAG and UAA. This is Peptide chain release factor 1 from Limosilactobacillus fermentum (strain NBRC 3956 / LMG 18251) (Lactobacillus fermentum).